We begin with the raw amino-acid sequence, 248 residues long: 3-deoxy-manno-octulosonate cytidylyltransferase (248 aa).

The protein belongs to the KdsB family.

It localises to the cytoplasm. The enzyme catalyses 3-deoxy-alpha-D-manno-oct-2-ulosonate + CTP = CMP-3-deoxy-beta-D-manno-octulosonate + diphosphate. Its pathway is nucleotide-sugar biosynthesis; CMP-3-deoxy-D-manno-octulosonate biosynthesis; CMP-3-deoxy-D-manno-octulosonate from 3-deoxy-D-manno-octulosonate and CTP: step 1/1. It functions in the pathway bacterial outer membrane biogenesis; lipopolysaccharide biosynthesis. In terms of biological role, activates KDO (a required 8-carbon sugar) for incorporation into bacterial lipopolysaccharide in Gram-negative bacteria. In Escherichia coli O127:H6 (strain E2348/69 / EPEC), this protein is 3-deoxy-manno-octulosonate cytidylyltransferase.